The primary structure comprises 396 residues: MAKGKFERTKPHVNVGTIGHVDHGKTTLTAAITTVLSTKFGGEARGYDQIDAAPEEKARGITINTAHVEYETESRHYAHVDCPGHADYVKNMITGAAQMDGAILVVSAADGPMPQTREHILLSRQVGVPYIIVFLNKADMVDDAELLELVEMEVRELLSKYDFPGDDTPIVKGSAKLALEGDKGELGEQAILSLAAALDTYIPTPERAVDGSFLMPVEDVFSISGRGTVVTGRIERGVVKVGEEIEIVGIKPTVKTTCTGVEMFRKLLDQGQAGDNVGILLRGTKREDVERGQVLAKPGSINPHTDFTAEVYILSKEEGGRHTPFFNGYRPQFYFRTTDVTGTIDLPQDKEMVLPGDNVTMTVKLLAPIAMEEGLRFAIREGGRTVGAGVVAKILK.

One can recognise a tr-type G domain in the interval 10–206 (KPHVNVGTIG…ALDTYIPTPE (197 aa)). Residues 19–26 (GHVDHGKT) are G1. A GTP-binding site is contributed by 19 to 26 (GHVDHGKT). T26 contacts Mg(2+). The tract at residues 60–64 (GITIN) is G2. The segment at 81–84 (DCPG) is G3. GTP-binding positions include 81–85 (DCPGH) and 136–139 (NKAD). The interval 136–139 (NKAD) is G4. Residues 174–176 (SAK) form a G5 region.

The protein belongs to the TRAFAC class translation factor GTPase superfamily. Classic translation factor GTPase family. EF-Tu/EF-1A subfamily. In terms of assembly, monomer.

The protein localises to the cytoplasm. It carries out the reaction GTP + H2O = GDP + phosphate + H(+). GTP hydrolase that promotes the GTP-dependent binding of aminoacyl-tRNA to the A-site of ribosomes during protein biosynthesis. This chain is Elongation factor Tu, found in Bordetella avium (strain 197N).